We begin with the raw amino-acid sequence, 470 residues long: Xaa-Pro aminopeptidase 2 (470 aa).

Residues D287, D299, H382, E413, and E437 each coordinate Mn(2+).

Belongs to the peptidase M24B family. As to quaternary structure, homodimer. The cofactor is Mn(2+).

It carries out the reaction Release of any N-terminal amino acid, including proline, that is linked to proline, even from a dipeptide or tripeptide.. This Streptomyces coelicolor (strain ATCC BAA-471 / A3(2) / M145) protein is Xaa-Pro aminopeptidase 2 (pepP2).